Consider the following 319-residue polypeptide: Ribosomal RNA large subunit methyltransferase F (319 aa).

A disordered region spans residues 1–25; the sequence is MAPFFSAMTSKKQSQGLPKGPHPDN. A compositionally biased stretch (polar residues) spans 7–16; the sequence is AMTSKKQSQG.

This sequence belongs to the methyltransferase superfamily. METTL16/RlmF family.

The protein localises to the cytoplasm. It catalyses the reaction adenosine(1618) in 23S rRNA + S-adenosyl-L-methionine = N(6)-methyladenosine(1618) in 23S rRNA + S-adenosyl-L-homocysteine + H(+). Specifically methylates the adenine in position 1618 of 23S rRNA. This is Ribosomal RNA large subunit methyltransferase F from Shewanella amazonensis (strain ATCC BAA-1098 / SB2B).